Here is a 430-residue protein sequence, read N- to C-terminus: Enolase (430 aa).

(2R)-2-phosphoglycerate is bound at residue Q164. The active-site Proton donor is E206. Residues D243, E286, and D313 each contribute to the Mg(2+) site. 4 residues coordinate (2R)-2-phosphoglycerate: K338, R367, S368, and K389. K338 acts as the Proton acceptor in catalysis.

The protein belongs to the enolase family. In terms of assembly, component of the RNA degradosome, a multiprotein complex involved in RNA processing and mRNA degradation. It depends on Mg(2+) as a cofactor.

It localises to the cytoplasm. The protein resides in the secreted. Its subcellular location is the cell surface. The catalysed reaction is (2R)-2-phosphoglycerate = phosphoenolpyruvate + H2O. Its pathway is carbohydrate degradation; glycolysis; pyruvate from D-glyceraldehyde 3-phosphate: step 4/5. Its function is as follows. Catalyzes the reversible conversion of 2-phosphoglycerate (2-PG) into phosphoenolpyruvate (PEP). It is essential for the degradation of carbohydrates via glycolysis. The protein is Enolase of Dichelobacter nodosus (strain VCS1703A).